Here is a 90-residue protein sequence, read N- to C-terminus: Small ribosomal subunit protein bS16 (90 aa).

It belongs to the bacterial ribosomal protein bS16 family.

This is Small ribosomal subunit protein bS16 from Streptococcus agalactiae serotype III (strain NEM316).